The sequence spans 648 residues: Threonine--tRNA ligase (648 aa).

The TGS domain occupies 1-61; sequence MIDIILPDGS…INTATVKAIT (61 aa). The interval 243-549 is catalytic; that stretch reads DHRKLGRELE…LIEHYSGRLP (307 aa). The Zn(2+) site is built by C349, H400, and H526.

This sequence belongs to the class-II aminoacyl-tRNA synthetase family. As to quaternary structure, homodimer. The cofactor is Zn(2+).

It is found in the cytoplasm. It carries out the reaction tRNA(Thr) + L-threonine + ATP = L-threonyl-tRNA(Thr) + AMP + diphosphate + H(+). Its function is as follows. Catalyzes the attachment of threonine to tRNA(Thr) in a two-step reaction: L-threonine is first activated by ATP to form Thr-AMP and then transferred to the acceptor end of tRNA(Thr). Also edits incorrectly charged L-seryl-tRNA(Thr). This chain is Threonine--tRNA ligase, found in Orientia tsutsugamushi (strain Boryong) (Rickettsia tsutsugamushi).